The chain runs to 77 residues: RNA-binding protein Hfq (77 aa).

Residues 10–70 form the Sm domain; the sequence is DAFLNHVRKA…ISTIMPGQPI (61 aa).

The protein belongs to the Hfq family. Homohexamer.

Its function is as follows. RNA chaperone that binds small regulatory RNA (sRNAs) and mRNAs to facilitate mRNA translational regulation in response to envelope stress, environmental stress and changes in metabolite concentrations. Also binds with high specificity to tRNAs. In Cereibacter sphaeroides (strain ATCC 17029 / ATH 2.4.9) (Rhodobacter sphaeroides), this protein is RNA-binding protein Hfq.